Reading from the N-terminus, the 148-residue chain is Small ribosomal subunit protein uS13 (148 aa).

It belongs to the universal ribosomal protein uS13 family. As to quaternary structure, part of the 30S ribosomal subunit. Forms a loose heterodimer with protein S19. Forms two bridges to the 50S subunit in the 70S ribosome.

In terms of biological role, located at the top of the head of the 30S subunit, it contacts several helices of the 16S rRNA. In the 70S ribosome it contacts the 23S rRNA (bridge B1a) and protein L5 of the 50S subunit (bridge B1b), connecting the 2 subunits; these bridges are implicated in subunit movement. This Pyrococcus abyssi (strain GE5 / Orsay) protein is Small ribosomal subunit protein uS13.